We begin with the raw amino-acid sequence, 481 residues long: Phototropic-responsive NPH3 family protein NPY4 (481 aa).

The BTB domain occupies 29-102 (TEIIIIIGNV…CYGITVTLNA (74 aa)). The 244-residue stretch at 207-450 (DWWVEDLCEL…VQVLFFEQIR (244 aa)) folds into the NPH3 domain. Tyr-391 is modified (phosphotyrosine). The tract at residues 456 to 481 (TGYSTPELTTTTLNTEDDEWDHEKEF) is disordered. Low complexity predominate over residues 460 to 469 (TPELTTTTLN).

The protein belongs to the NPH3 family. As to expression, expressed in the hypocotyl cells that would differentiate into vascular bundles. Highly expressed in primary root tips and radicles.

The protein resides in the cell membrane. The protein localises to the cytoplasm. It is found in the cytosol. The protein operates within protein modification; protein ubiquitination. Its function is as follows. May act as a substrate-specific adapter of an E3 ubiquitin-protein ligase complex (CUL3-RBX1-BTB) which mediates the ubiquitination and subsequent proteasomal degradation of target proteins. Plays an essential role in auxin-mediated organogenesis and in root gravitropic responses through the control of PIN proteins (e.g. PIN1 and PIN2) polarity in the root tip endodermal cell layer and in shoot epidermis. Recruited to the plasma membrane by PINs (e.g. PIN1 and PIN2) and, in concert with AGC kinases-mediated (e.g. D6PK and PID) PINs phosphorylation, maintains their polarity through limiting lateral diffusion-based escape. The chain is Phototropic-responsive NPH3 family protein NPY4 from Arabidopsis thaliana (Mouse-ear cress).